We begin with the raw amino-acid sequence, 414 residues long: 2,3-diketo-5-methylthiopentyl-1-phosphate enolase (414 aa).

Lys-99 (proton acceptor) is an active-site residue. Residues Lys-148, 174 to 177 (KDDE), His-265, Gly-338, and 360 to 361 (GG) each bind substrate. Residues Lys-174, Asp-176, and Glu-177 each coordinate Mg(2+). Position 174 is an N6-carboxylysine (Lys-174).

It belongs to the RuBisCO large chain family. Type IV subfamily. As to quaternary structure, homodimer. Mg(2+) serves as cofactor.

It catalyses the reaction 5-methylsulfanyl-2,3-dioxopentyl phosphate = 2-hydroxy-5-methylsulfanyl-3-oxopent-1-enyl phosphate. The protein operates within amino-acid biosynthesis; L-methionine biosynthesis via salvage pathway; L-methionine from S-methyl-5-thio-alpha-D-ribose 1-phosphate: step 3/6. Catalyzes the enolization of 2,3-diketo-5-methylthiopentyl-1-phosphate (DK-MTP-1-P) into 2-hydroxy-3-keto-5-methylthiopentenyl-1-phosphate (HK-MTPenyl-1-P). The polypeptide is 2,3-diketo-5-methylthiopentyl-1-phosphate enolase (Bacillus cereus (strain B4264)).